We begin with the raw amino-acid sequence, 204 residues long: Rho GDP-dissociation inhibitor 1 (204 aa).

Residues 1 to 36 (MAEQEPTAEQLAQIAAENEEDEHSVNYKPPAQKSIQ) form a disordered region. The residue at position 2 (Ala-2) is an N-acetylalanine. Ser-34 is modified (phosphoserine). The residue at position 43 (Lys-43) is an N6-acetyllysine. The residue at position 47 (Ser-47) is a Phosphoserine. An N6-acetyllysine mark is found at Lys-105 and Lys-127. Glycyl lysine isopeptide (Lys-Gly) (interchain with G-Cter in SUMO1); alternate cross-links involve residues Lys-138 and Lys-141. Residues Lys-138 and Lys-141 each participate in a glycyl lysine isopeptide (Lys-Gly) (interchain with G-Cter in SUMO2); alternate cross-link. The residue at position 141 (Lys-141) is an N6-acetyllysine; alternate. Lys-141 bears the N6-succinyllysine; alternate mark. An N6-acetyllysine modification is found at Lys-178.

Belongs to the Rho GDI family. As to quaternary structure, monomer. Interacts with FER. Interacts with PLXNB3. Forms a heterodimer with RAC1. Interacts with RHOA, the affinity is increased by three orders of magnitude when RHOA is prenylated. Interacts with PSMD10; the interaction increases ARHGDIA association with RHOA, leading to ARHGDIA-mediated inactivation of RHOA and ROCK and prolonged AKT activation. Interacts with KANK2; the interaction is direct and may regulate the interaction of ARHGDIA with RHOA, RAC1 and CDC42. Interacts with RHOC. Interacts with CDC42. Interacts with NGFR (via death domain); NGFR binding decreases the affinity for RHOA. In terms of tissue distribution, in kidney glomerulus, expressed in podocytes and mesangial cells.

It is found in the cytoplasm. Its function is as follows. Controls Rho proteins homeostasis. Regulates the GDP/GTP exchange reaction of the Rho proteins by inhibiting the dissociation of GDP from them, and the subsequent binding of GTP to them. Retains Rho proteins such as CDC42, RAC1 and RHOA in an inactive cytosolic pool, regulating their stability and protecting them from degradation. Actively involved in the recycling and distribution of activated Rho GTPases in the cell, mediates extraction from membranes of both inactive and activated molecules due its exceptionally high affinity for prenylated forms. Through the modulation of Rho proteins, may play a role in cell motility regulation. In glioma cells, inhibits cell migration and invasion by mediating the signals of SEMA5A and PLXNB3 that lead to inactivation of RAC1. This Mus musculus (Mouse) protein is Rho GDP-dissociation inhibitor 1 (Arhgdia).